Consider the following 903-residue polypeptide: DNA transposase THAP9 (903 aa).

Residues 1-89 form a THAP-type zinc finger; it reads MTRSCSAVGC…LKKGAVPSVS (89 aa). Positions 123 to 126 match the HCFC1-binding motif (HBM) motif; that stretch reads DHNY.

Active transposase that specifically recognizes the bipartite 5'-TXXGGGX(A/T)-3' consensus motif and mediates transposition. The protein is DNA transposase THAP9 (THAP9) of Homo sapiens (Human).